A 532-amino-acid chain; its full sequence is Arginine--tRNA ligase (532 aa).

A 'HIGH' region motif is present at residues 122–132; the sequence is ANPTGPLHVAS.

Belongs to the class-I aminoacyl-tRNA synthetase family. As to quaternary structure, monomer.

Its subcellular location is the cytoplasm. The enzyme catalyses tRNA(Arg) + L-arginine + ATP = L-arginyl-tRNA(Arg) + AMP + diphosphate. The chain is Arginine--tRNA ligase from Elusimicrobium minutum (strain Pei191).